Consider the following 203-residue polypeptide: Probable proteasome subunit beta type-4 (203 aa).

It belongs to the peptidase T1B family. As to quaternary structure, the 26S proteasome consists of a 20S proteasome core and two 19S regulatory subunits. The 20S proteasome core is composed of 28 subunits that are arranged in four stacked rings, resulting in a barrel-shaped structure. The two end rings are each formed by seven alpha subunits, and the two central rings are each formed by seven beta subunits. The catalytic chamber with the active sites is on the inside of the barrel.

The protein localises to the cytoplasm. Its subcellular location is the nucleus. Its function is as follows. Non-catalytic component of the proteasome, a multicatalytic proteinase complex which is characterized by its ability to cleave peptides with Arg, Phe, Tyr, Leu, and Glu adjacent to the leaving group at neutral or slightly basic pH. The proteasome has an ATP-dependent proteolytic activity. The chain is Probable proteasome subunit beta type-4 (pcb-4) from Neurospora crassa (strain ATCC 24698 / 74-OR23-1A / CBS 708.71 / DSM 1257 / FGSC 987).